The primary structure comprises 154 residues: SsrA-binding protein (154 aa).

The protein belongs to the SmpB family.

The protein localises to the cytoplasm. In terms of biological role, required for rescue of stalled ribosomes mediated by trans-translation. Binds to transfer-messenger RNA (tmRNA), required for stable association of tmRNA with ribosomes. tmRNA and SmpB together mimic tRNA shape, replacing the anticodon stem-loop with SmpB. tmRNA is encoded by the ssrA gene; the 2 termini fold to resemble tRNA(Ala) and it encodes a 'tag peptide', a short internal open reading frame. During trans-translation Ala-aminoacylated tmRNA acts like a tRNA, entering the A-site of stalled ribosomes, displacing the stalled mRNA. The ribosome then switches to translate the ORF on the tmRNA; the nascent peptide is terminated with the 'tag peptide' encoded by the tmRNA and targeted for degradation. The ribosome is freed to recommence translation, which seems to be the essential function of trans-translation. In Lachnoclostridium phytofermentans (strain ATCC 700394 / DSM 18823 / ISDg) (Clostridium phytofermentans), this protein is SsrA-binding protein.